The sequence spans 320 residues: D-alanine--D-alanine ligase (320 aa).

In terms of domain architecture, ATP-grasp spans 101-317 (KMIFQGAGLP…FSELVCKILS (217 aa)). 148 to 203 (INQLGLPLIVKPSREGSSFGMTKVEHLDQLDDALKKAWHYDEEILVEKWHFGTELT) is an ATP binding site. Residues aspartate 271, glutamate 284, and asparagine 286 each coordinate Mg(2+).

This sequence belongs to the D-alanine--D-alanine ligase family. Mg(2+) is required as a cofactor. The cofactor is Mn(2+).

Its subcellular location is the cytoplasm. The enzyme catalyses 2 D-alanine + ATP = D-alanyl-D-alanine + ADP + phosphate + H(+). The protein operates within cell wall biogenesis; peptidoglycan biosynthesis. Functionally, cell wall formation. In Hamiltonella defensa subsp. Acyrthosiphon pisum (strain 5AT), this protein is D-alanine--D-alanine ligase.